A 419-amino-acid polypeptide reads, in one-letter code: Cell division protein FtsZ (419 aa).

GTP contacts are provided by residues G22–N26, G109–G111, E140, R144, and D188. The tract at residues E397 to R419 is disordered.

It belongs to the FtsZ family. Homodimer. Polymerizes to form a dynamic ring structure in a strictly GTP-dependent manner. Interacts directly with several other division proteins. Interacts with CcrZ; the interaction is direct.

The protein localises to the cytoplasm. In terms of biological role, essential cell division protein that forms a contractile ring structure (Z ring) at the future cell division site. The regulation of the ring assembly controls the timing and the location of cell division. One of the functions of the FtsZ ring is to recruit other cell division proteins to the septum to produce a new cell wall between the dividing cells. Binds GTP and shows GTPase activity. This Streptococcus pneumoniae serotype 2 (strain D39 / NCTC 7466) protein is Cell division protein FtsZ.